Consider the following 63-residue polypeptide: Large ribosomal subunit protein bL35 (63 aa).

Composition is skewed to basic residues over residues 1–25 (MPKM…KHRQ) and 32–47 (LTKK…RPKK). The segment at 1–55 (MPKMKSKSSAAKRFKKTANGFKHRQSFTSHILTKKSTKRKRHLRPKKQVNPSDVP) is disordered.

It belongs to the bacterial ribosomal protein bL35 family.

The sequence is that of Large ribosomal subunit protein bL35 from Hahella chejuensis (strain KCTC 2396).